The sequence spans 302 residues: Ornithine carbamoyltransferase (302 aa).

Residues 52–55 (STRT), Gln-79, Arg-103, and 130–133 (HPCQ) contribute to the carbamoyl phosphate site. Residues Asn-161, Asp-222, and 226–227 (SM) contribute to the L-ornithine site. Carbamoyl phosphate contacts are provided by residues 262 to 263 (CL) and Arg-290.

The protein belongs to the aspartate/ornithine carbamoyltransferase superfamily. OTCase family.

It localises to the cytoplasm. It catalyses the reaction carbamoyl phosphate + L-ornithine = L-citrulline + phosphate + H(+). The protein operates within amino-acid biosynthesis; L-arginine biosynthesis; L-arginine from L-ornithine and carbamoyl phosphate: step 1/3. Its function is as follows. Reversibly catalyzes the transfer of the carbamoyl group from carbamoyl phosphate (CP) to the N(epsilon) atom of ornithine (ORN) to produce L-citrulline. The sequence is that of Ornithine carbamoyltransferase from Syntrophus aciditrophicus (strain SB).